Here is a 218-residue protein sequence, read N- to C-terminus: Glutathione S-transferase class-mu 26 kDa isozyme 51 (218 aa).

The GST N-terminal domain occupies 2-83 (PAKLGYWKIR…YIADKHGMLG (82 aa)). Glutathione-binding positions include 7–8 (YW), 41–45 (WFGDK), 54–55 (NL), and 67–68 (QS). The 119-residue stretch at 85 to 203 (TPEERARISM…ESEKFIKWPL (119 aa)) folds into the GST C-terminal domain. Residue Tyr-111 participates in substrate binding.

It belongs to the GST superfamily. Mu family. As to quaternary structure, homodimer.

It is found in the cytoplasm. The catalysed reaction is RX + glutathione = an S-substituted glutathione + a halide anion + H(+). Its function is as follows. Conjugation of reduced glutathione to a wide number of exogenous and endogenous hydrophobic electrophiles. GST isoenzymes appear to play a central role in the parasite detoxification system. Other functions are also suspected including a role in increasing the solubility of haematin in the parasite gut. This is Glutathione S-transferase class-mu 26 kDa isozyme 51 from Fasciola hepatica (Liver fluke).